Consider the following 355-residue polypeptide: Protein FIP1 (355 aa).

Helical transmembrane passes span 42–62, 72–92, 113–133, and 149–169; these read YLYMLLLAGYAILAAGAPWMF, LLCCCDVALLVVTGVFQQYFV, VVRLPFAIAAYGTAAMLLVIV, and IIMLVEAVGAGFFMGLYIGYV. Residues 220 to 337 adopt a coiled-coil conformation; the sequence is LHFLSEEILC…RMSNSELQKE (118 aa). Residues 331–340 show a composition bias toward basic and acidic residues; it reads NSELQKEVAS. Residues 331–355 form a disordered region; that stretch reads NSELQKEVASTRRKQMLETTTSEQP.

Belongs to the TMEM192 family. As to quaternary structure, interacts with FRI.

It localises to the membrane. The protein is Protein FIP1 of Arabidopsis thaliana (Mouse-ear cress).